We begin with the raw amino-acid sequence, 431 residues long: Enolase (431 aa).

Glutamine 167 serves as a coordination point for (2R)-2-phosphoglycerate. The active-site Proton donor is glutamate 209. Residues aspartate 246, glutamate 290, and aspartate 317 each contribute to the Mg(2+) site. Lysine 342, arginine 371, serine 372, and lysine 393 together coordinate (2R)-2-phosphoglycerate. The active-site Proton acceptor is lysine 342.

This sequence belongs to the enolase family. As to quaternary structure, component of the RNA degradosome, a multiprotein complex involved in RNA processing and mRNA degradation. Mg(2+) is required as a cofactor.

It localises to the cytoplasm. The protein localises to the secreted. It is found in the cell surface. The enzyme catalyses (2R)-2-phosphoglycerate = phosphoenolpyruvate + H2O. It participates in carbohydrate degradation; glycolysis; pyruvate from D-glyceraldehyde 3-phosphate: step 4/5. Functionally, catalyzes the reversible conversion of 2-phosphoglycerate (2-PG) into phosphoenolpyruvate (PEP). It is essential for the degradation of carbohydrates via glycolysis. The sequence is that of Enolase from Pectobacterium atrosepticum (strain SCRI 1043 / ATCC BAA-672) (Erwinia carotovora subsp. atroseptica).